A 113-amino-acid chain; its full sequence is UPF0416 protein RF_0879 (113 aa).

This sequence belongs to the UPF0416 family.

This Rickettsia felis (strain ATCC VR-1525 / URRWXCal2) (Rickettsia azadi) protein is UPF0416 protein RF_0879.